The primary structure comprises 842 residues: Cullin-8 (842 aa).

The interval 1–50 (MINESVSKREGFHESISRETSASNALGLYNKFNDERNPRYRTMIAELHEF) is required for interaction with MMS1. Residues 755 to 765 (LQSSNTGGERT) are compositionally biased toward polar residues. The tract at residues 755 to 775 (LQSSNTGGERTSSAHHEGSNS) is disordered. Lys-791 is covalently cross-linked (Glycyl lysine isopeptide (Lys-Gly) (interchain with G-Cter in NEDD8)).

Belongs to the cullin family. Component of multiple cullin-RING ligases (CRLs) composed of 4 subunits: the RING protein HRT1, the cullin RTT101, a linker protein MMS1, and one of many alternative substrate receptors belonging to a protein family described as DCAF (DDB1- and CUL4-associated factor). Component of a RTT101(MMS1-MMS22) complex with the substrate receptor MMS22. This complex further interacts with RTT107 and CTF4 to form RTT101-MMS1-MMS22-RTT107 and RTT101-MMS1-MMS22-CTF4 complexes respectively. Component of a RTT101(MSS1-CRT10) complex with the substrate receptor CRT10. Component of a RTT101(MSS1-ESC2) complex with the potential substrate receptor ESC2. Component of a RTT101(MSS1-ORC5) complex with the potential substrate receptor ORC5. Interacts (via C-ter) with HRT1; required for ubiquitin-ligase activity. Interacts (via N-ter) with MMS1. Neddylated. HRT1-binding is necessary for RUB1/NEDD8 modification of RTT101. The modification enhances ubiquitin-ligase activity.

It is found in the cytoplasm. Its subcellular location is the nucleus. It participates in protein modification; protein ubiquitination. Core component of multiple cullin-RING-based E3 ubiquitin-protein ligase complexes (CRLs), which mediate the ubiquitination of target proteins. As a scaffold protein may contribute to catalysis through positioning of the substrate and the ubiquitin-conjugating enzyme. The CRL associates with CDC34 as the E2 ubiquitin-conjugating enzyme. The functional specificity of the CRL depends on the type of the associated substrate receptor protein. RTT101(MMS1-MMS22) promotes fork progression through damaged DNA or natural pause sites by stabilizing replication proteins like the replication fork-pausing complex (FPC) and leading-strand polymerase at stalled replication forks. RTT101(MMS1-MMS22) ubiquitinates the acetylated histones H3K56ac-H4 at lysine residues H3K121, H3K122 and H3K125. Ubiquitination is required for efficient histone deposition during replication-coupled nucleosome assembly, probably by facilitating the transfer of H3-H4 from ASF1 to other chaperones involved in histone deposition. RTT101(MMS1-CRT10) may regulate nucleotide synthesis through transcriptional regulation of ribonucleotide reductase. RTT101(MMS1) is also involved in the non-functional rRNA decay (NRD) of 25S rRNA through the selective, ubiquitination-dependent degradation of nonfunctional ribosomal particles. Ubiquitinates the FACT (facilitates chromatin transcription) complex subunit SPT16 in an MMS1-independent manner. Involved in regulation of Ty1 transposition and protects the genome from Ty1 integration upstream of tRNA genes. This is Cullin-8 (RTT101) from Saccharomyces cerevisiae (strain ATCC 204508 / S288c) (Baker's yeast).